The following is a 132-amino-acid chain: Actin-related protein 2/3 complex subunit 5A (132 aa).

Ala-2 is subject to N-acetylalanine.

The protein belongs to the ARPC5 family. In terms of assembly, component of the Arp2/3 complex composed of ARP2, ARP3, ARPC1/p41-ARC, ARPC2/p34-ARC, ARPC3/p21-ARC, ARPC4/p20-ARC and ARPC5/p16-ARC. Expressed at low levels in all tissues with a relatively highest expression in inflorescences.

The protein resides in the cytoplasm. Its subcellular location is the cytoskeleton. The protein localises to the cell projection. Functions as a component of the Arp2/3 complex which is involved in regulation of actin polymerization and together with an activating nucleation-promoting factor (NPF) mediates the formation of branched actin networks. Arp2/3 complex plays a critical role in the control of cell morphogenesis via the modulation of cell polarity development. The polypeptide is Actin-related protein 2/3 complex subunit 5A (ARPC5A) (Arabidopsis thaliana (Mouse-ear cress)).